A 298-amino-acid polypeptide reads, in one-letter code: Mimecan (298 aa).

A signal peptide spans 1–20 (MKTLQSTLLLLLLVPLIKPA). Residue T80 is glycosylated (O-linked (GalNAc...) threonine). N-linked (GlcNAc...) (keratan sulfate) asparagine glycosylation occurs at N88. LRR repeat units follow at residues 112 to 131 (DAVPPLPKESAYLYARFNKI), 132 to 155 (KKLTAKDFADIPNLRRLDFTGNLI), 156 to 179 (EDIEDGTFSKLSLLEELSLAENQL), 180 to 199 (LKLPVLPPKLTLFNAKYNKI), 200 to 225 (KSRGIKANAFKKLNNLTFLYLDHNAL), 226 to 246 (ESVPLNLPESLRVIHLQFNNI), and 247 to 277 (ASITDDTFCKANDTSYIRDRIEEIRLEGNPI). N-linked (GlcNAc...) (keratan sulfate) asparagine glycosylation occurs at N214. C255 and C288 are oxidised to a cystine. A glycan (N-linked (GlcNAc...) (keratan sulfate) asparagine) is linked at N258.

It belongs to the small leucine-rich proteoglycan (SLRP) family. SLRP class III subfamily. Post-translationally, O-glycosylated with a core 1 or possibly core 8 glycan. Contains keratan sulfate. In terms of tissue distribution, bone.

The protein resides in the secreted. It localises to the extracellular space. The protein localises to the extracellular matrix. In terms of biological role, induces bone formation in conjunction with TGF-beta-1 or TGF-beta-2. The polypeptide is Mimecan (OGN) (Homo sapiens (Human)).